A 1207-amino-acid chain; its full sequence is DNA-directed RNA polymerase subunit beta' (1207 aa).

Positions 60, 62, 75, and 78 each coordinate Zn(2+). Residues D449, D451, and D453 each coordinate Mg(2+). Positions 822, 896, 903, and 906 each coordinate Zn(2+).

The protein belongs to the RNA polymerase beta' chain family. The RNAP catalytic core consists of 2 alpha, 1 beta, 1 beta' and 1 omega subunit. When a sigma factor is associated with the core the holoenzyme is formed, which can initiate transcription. It depends on Mg(2+) as a cofactor. The cofactor is Zn(2+).

The enzyme catalyses RNA(n) + a ribonucleoside 5'-triphosphate = RNA(n+1) + diphosphate. Functionally, DNA-dependent RNA polymerase catalyzes the transcription of DNA into RNA using the four ribonucleoside triphosphates as substrates. The sequence is that of DNA-directed RNA polymerase subunit beta' from Staphylococcus aureus (strain NCTC 8325 / PS 47).